Consider the following 181-residue polypeptide: Heavy metal-associated isoprenylated plant protein 46 (181 aa).

One can recognise an HMA domain in the interval 2–71; that stretch reads KQKILIRVTM…KVAFAELVSV (70 aa). The segment at 74–121 is disordered; sequence VEPPKKEDEKKGGDGKGAEGKGGDQKGGDKKGPDDKEPPEPKPVPCYP. Residues 75 to 113 show a composition bias toward basic and acidic residues; it reads EPPKKEDEKKGGDGKGAEGKGGDQKGGDKKGPDDKEPPE. Cysteine methyl ester is present on Cys-178. Cys-178 carries the S-farnesyl cysteine lipid modification. Positions 179–181 are cleaved as a propeptide — removed in mature form; it reads KIM.

The protein belongs to the HIPP family.

Its function is as follows. Probable heavy-metal-binding protein. This is Heavy metal-associated isoprenylated plant protein 46 from Arabidopsis thaliana (Mouse-ear cress).